Consider the following 97-residue polypeptide: Large ribosomal subunit protein bL27 (97 aa).

Positions 1–21 are disordered; it reads MAHKKGVGSSRNGRDSNPKYR.

This sequence belongs to the bacterial ribosomal protein bL27 family.

This chain is Large ribosomal subunit protein bL27, found in Gemmatimonas aurantiaca (strain DSM 14586 / JCM 11422 / NBRC 100505 / T-27).